The following is a 160-amino-acid chain: Phosphopantetheine adenylyltransferase (160 aa).

Thr9 contacts substrate. ATP is bound by residues 9–10 and His17; that span reads TF. Substrate contacts are provided by Lys41, Leu73, and Arg87. ATP is bound by residues 88 to 90, Glu98, and 123 to 129; these read GLR and FSYTSSS.

This sequence belongs to the bacterial CoaD family. In terms of assembly, homohexamer. Requires Mg(2+) as cofactor.

Its subcellular location is the cytoplasm. The catalysed reaction is (R)-4'-phosphopantetheine + ATP + H(+) = 3'-dephospho-CoA + diphosphate. It functions in the pathway cofactor biosynthesis; coenzyme A biosynthesis; CoA from (R)-pantothenate: step 4/5. Functionally, reversibly transfers an adenylyl group from ATP to 4'-phosphopantetheine, yielding dephospho-CoA (dPCoA) and pyrophosphate. The protein is Phosphopantetheine adenylyltransferase of Opitutus terrae (strain DSM 11246 / JCM 15787 / PB90-1).